The sequence spans 830 residues: Frameshifted structural polyprotein (830 aa).

A disordered region spans residues 58 to 109 (AIAPARPPKPKKKKTTKPKPKTQPKKINGKTQQQKKKDKQADKKKKKPGKRE). Over residues 65–107 (PKPKKKKTTKPKPKTQPKKINGKTQQQKKKDKQADKKKKKPGK) the composition is skewed to basic residues. The ribosome-binding stretch occupies residues 94–106 (KDKQADKKKKKPG). Residues Cys119 and Cys134 are joined by a disulfide bond. The Peptidase S3 domain maps to 119–267 (CIFEVKHEGK…RVTPEGSEEW (149 aa)). Active-site charge relay system residues include His145, Asp167, and Ser219. N-linked (GlcNAc...) asparagine; by host glycosylation is found at Asn280, Asn327, Asn533, and Asn595. A helical transmembrane segment spans residues 702–722 (AVVGMSLLALISIFASCYMLV). Residues Cys718, Cys728, Cys748, and Cys749 are each lipidated (S-palmitoyl cysteine; by host). Positions 728–748 (CLTPYALTPGAAVPWTLGILC) are transient transmembrane before p62-6K protein processing. The next 2 helical transmembrane spans lie at 771–791 (ALFW…TYCL) and 793–813 (NVLC…RGHR).

In terms of assembly, homodimer. Homomultimer. Interacts with host karyopherin KPNA4; this interaction allows the nuclear import of the viral capsid protein. Precursor of protein E3/E2: The precursor of protein E3/E2 and E1 form a heterodimer shortly after synthesis. Interacts with host IRAK1; the interaction leads to inhibition of IRAK1-dependent signaling. Processing of the precursor of protein E3/E2 into E2 and E3 results in a heterodimer of the spike glycoproteins E2 and E1. Spike at virion surface are constituted of three E2-E1 heterodimers. Interacts with 6K protein. Interacts with host MXRA8; this interaction mediates virus entry. Post-translationally, specific enzymatic cleavages in vivo yield mature proteins. Capsid protein is auto-cleaved during polyprotein translation, unmasking a signal peptide at the N-terminus of the precursor of E3/E2. The remaining polyprotein is then targeted to the host endoplasmic reticulum, where host signal peptidase cleaves it into pE2 and TF. pE2 is further processed to mature E3 and E2 by host furin in trans-Golgi vesicle.

It localises to the virion. It is found in the host cytoplasm. The protein localises to the host cell membrane. The protein resides in the host nucleus. Its subcellular location is the virion membrane. It carries out the reaction Autocatalytic release of the core protein from the N-terminus of the togavirus structural polyprotein by hydrolysis of a -Trp-|-Ser- bond.. In terms of biological role, forms an icosahedral capsid with a T=4 symmetry composed of 240 copies of the capsid protein surrounded by a lipid membrane through which penetrate 80 spikes composed of trimers of E1-E2 heterodimers. The capsid protein binds to the viral RNA genome at a site adjacent to a ribosome binding site for viral genome translation following genome release. Possesses a protease activity that results in its autocatalytic cleavage from the nascent structural protein. Following its self-cleavage, the capsid protein transiently associates with ribosomes, and within several minutes the protein binds to viral RNA and rapidly assembles into icosahedric core particles. The resulting nucleocapsid eventually associates with the cytoplasmic domain of the spike glycoprotein E2 at the cell membrane, leading to budding and formation of mature virions. In case of infection, new virions attach to target cells and after clathrin-mediated endocytosis their membrane fuses with the host endosomal membrane. This leads to the release of the nucleocapsid into the cytoplasm, followed by an uncoating event necessary for the genomic RNA to become accessible. The uncoating might be triggered by the interaction of capsid proteins with ribosomes. Binding of ribosomes would release the genomic RNA since the same region is genomic RNA-binding and ribosome-binding. Specifically inhibits interleukin-1 receptor-associated kinase 1/IRAK1-dependent signaling during viral entry, representing a means by which the alphaviruses may evade innate immune detection and activation prior to viral gene expression. Provides the signal sequence for p62 (E3/E2) translocation to the host endoplasmic reticulum. Mediates pH protection of E1 during secretory pathway trans- port. Its function is as follows. Plays a role in viral attachment to target host cell, by binding to the cell receptor. Synthesized as a p62 precursor which is processed by furin at the cell membrane just before virion budding, giving rise to E2-E1 heterodimer. The p62-E1 heterodimer is stable, whereas E2-E1 is unstable and dissociate at low pH. p62 is processed at the last step, presumably to avoid E1 fusion activation before its final export to cell surface. E2 C-terminus contains a transitory transmembrane that would be disrupted by palmitoylation, resulting in reorientation of the C-terminal tail from lumenal to cytoplasmic side. This step is critical since E2 C-terminus is involved in budding by interacting with capsid proteins. This release of E2 C-terminus in cytoplasm occurs lately in protein export, and precludes premature assembly of particles at the endoplasmic reticulum membrane. Functionally, virion component that may play a role during viral assembly. In Aedes (Middle-African hedgehog), this protein is Frameshifted structural polyprotein.